Consider the following 397-residue polypeptide: Elongation factor Tu (397 aa).

The region spanning 10–206 (KPHVNIGTIG…AVDSYIPTPE (197 aa)) is the tr-type G domain. Residues 19-26 (GHVDHGKT) are G1. 19 to 26 (GHVDHGKT) contacts GTP. Mg(2+) is bound at residue threonine 26. The G2 stretch occupies residues 60–64 (GITIN). The interval 81 to 84 (DCPG) is G3. GTP is bound by residues 81 to 85 (DCPGH) and 136 to 139 (NKAD). The G4 stretch occupies residues 136 to 139 (NKAD). The G5 stretch occupies residues 174-176 (SAL).

The protein belongs to the TRAFAC class translation factor GTPase superfamily. Classic translation factor GTPase family. EF-Tu/EF-1A subfamily. Monomer.

Its subcellular location is the cytoplasm. It carries out the reaction GTP + H2O = GDP + phosphate + H(+). GTP hydrolase that promotes the GTP-dependent binding of aminoacyl-tRNA to the A-site of ribosomes during protein biosynthesis. The sequence is that of Elongation factor Tu from Clostridium perfringens (strain ATCC 13124 / DSM 756 / JCM 1290 / NCIMB 6125 / NCTC 8237 / Type A).